The following is a 177-amino-acid chain: Large ribosomal subunit protein uL6 (177 aa).

The protein belongs to the universal ribosomal protein uL6 family. In terms of assembly, part of the 50S ribosomal subunit.

This protein binds to the 23S rRNA, and is important in its secondary structure. It is located near the subunit interface in the base of the L7/L12 stalk, and near the tRNA binding site of the peptidyltransferase center. The chain is Large ribosomal subunit protein uL6 from Pectobacterium carotovorum subsp. carotovorum (strain PC1).